We begin with the raw amino-acid sequence, 252 residues long: Indole-3-glycerol phosphate synthase (252 aa).

This sequence belongs to the TrpC family.

It catalyses the reaction 1-(2-carboxyphenylamino)-1-deoxy-D-ribulose 5-phosphate + H(+) = (1S,2R)-1-C-(indol-3-yl)glycerol 3-phosphate + CO2 + H2O. Its pathway is amino-acid biosynthesis; L-tryptophan biosynthesis; L-tryptophan from chorismate: step 4/5. This chain is Indole-3-glycerol phosphate synthase, found in Listeria monocytogenes serotype 4a (strain HCC23).